A 439-amino-acid chain; its full sequence is Ribosomal protein uS12 methylthiotransferase RimO (439 aa).

Residues 2–114 form the MTTase N-terminal domain; sequence SKLYLMSLGC…IDEMILKKTN (113 aa). [4Fe-4S] cluster is bound by residues Cys-11, Cys-45, Cys-77, Cys-146, Cys-150, and Cys-153. The 232-residue stretch at 132 to 363 folds into the Radical SAM core domain; that stretch reads TGSNSHAFIK…VDEVIEKSFE (232 aa).

Belongs to the methylthiotransferase family. RimO subfamily. It depends on [4Fe-4S] cluster as a cofactor.

The protein localises to the cytoplasm. The enzyme catalyses L-aspartate(89)-[ribosomal protein uS12]-hydrogen + (sulfur carrier)-SH + AH2 + 2 S-adenosyl-L-methionine = 3-methylsulfanyl-L-aspartate(89)-[ribosomal protein uS12]-hydrogen + (sulfur carrier)-H + 5'-deoxyadenosine + L-methionine + A + S-adenosyl-L-homocysteine + 2 H(+). In terms of biological role, catalyzes the methylthiolation of an aspartic acid residue of ribosomal protein uS12. The protein is Ribosomal protein uS12 methylthiotransferase RimO of Campylobacter jejuni subsp. jejuni serotype O:6 (strain 81116 / NCTC 11828).